Consider the following 66-residue polypeptide: Large ribosomal subunit protein bL35 (66 aa).

It belongs to the bacterial ribosomal protein bL35 family.

This Beijerinckia indica subsp. indica (strain ATCC 9039 / DSM 1715 / NCIMB 8712) protein is Large ribosomal subunit protein bL35.